Consider the following 251-residue polypeptide: Cell division protein ZapD (251 aa).

The protein belongs to the ZapD family. Interacts with FtsZ.

It is found in the cytoplasm. In terms of biological role, cell division factor that enhances FtsZ-ring assembly. Directly interacts with FtsZ and promotes bundling of FtsZ protofilaments, with a reduction in FtsZ GTPase activity. The protein is Cell division protein ZapD of Paraburkholderia xenovorans (strain LB400).